Reading from the N-terminus, the 276-residue chain is Protein MGF 360-15R (276 aa).

It belongs to the asfivirus MGF 360 family.

In terms of biological role, plays a role in virus cell tropism, and may be required for efficient virus replication in macrophages. The chain is Protein MGF 360-15R from African swine fever virus (isolate Tick/South Africa/Pretoriuskop Pr4/1996) (ASFV).